The chain runs to 473 residues: ATP synthase subunit beta (473 aa).

153-160 serves as a coordination point for ATP; sequence GGAGVGKT.

This sequence belongs to the ATPase alpha/beta chains family. In terms of assembly, F-type ATPases have 2 components, CF(1) - the catalytic core - and CF(0) - the membrane proton channel. CF(1) has five subunits: alpha(3), beta(3), gamma(1), delta(1), epsilon(1). CF(0) has three main subunits: a(1), b(2) and c(9-12). The alpha and beta chains form an alternating ring which encloses part of the gamma chain. CF(1) is attached to CF(0) by a central stalk formed by the gamma and epsilon chains, while a peripheral stalk is formed by the delta and b chains.

Its subcellular location is the cell inner membrane. It carries out the reaction ATP + H2O + 4 H(+)(in) = ADP + phosphate + 5 H(+)(out). Produces ATP from ADP in the presence of a proton gradient across the membrane. The catalytic sites are hosted primarily by the beta subunits. The protein is ATP synthase subunit beta of Rickettsia akari (strain Hartford).